Reading from the N-terminus, the 137-residue chain is Basic phospholipase A2 homolog bothropstoxin-I (137 aa).

Residues 1 to 16 form the signal peptide; sequence MRTLWIMAVLLVGVEG. 7 disulfide bridges follow: Cys-42/Cys-131, Cys-44/Cys-60, Cys-59/Cys-111, Cys-65/Cys-137, Cys-66/Cys-104, Cys-73/Cys-97, and Cys-91/Cys-102. The interval 121-133 is important for membrane-damaging activities in eukaryotes and bacteria; heparin-binding; that stretch reads KKYRYHLKPFCKK.

It belongs to the phospholipase A2 family. Group II subfamily. K49 sub-subfamily. Homodimer; non-covalently linked (probable alternative/compact dimer conformation in solution). Binds to heparin. Expressed by the venom gland.

The protein localises to the secreted. With respect to regulation, suramin inhibits both myotoxic and muscle-paralyzing activities. Chicoric acid inhibits myotoxic activity. Zinc ions inhibits the myotoxic activity and the neuromuscular blockade. Heparin inhibits myotoxic activity. Snake venom phospholipase A2 homolog that lacks enzymatic activity. Shows local myotoxic activity. Induces inflammation, since it induces edema and leukocytes infiltration. In addition, it induces NLRP3 NLRP3, ASC (PYCARD), caspase-1 (CASP1), and IL-1beta (IL1B) gene expression in the gastrocnemius muscle, showing that it is able to activate NLRP3 inflammasome. It also damages artificial and myoblast membranes by a calcium-independent mechanism, has bactericidal activity, and induces neuromuscular blockade. A model of myotoxic mechanism has been proposed: an apo Lys49-PLA2 is activated by the entrance of a hydrophobic molecule (e.g. fatty acid) at the hydrophobic channel of the protein leading to a reorientation of a monomer. This reorientation causes a transition between 'inactive' to 'active' states, causing alignment of C-terminal and membrane-docking sites (MDoS) side-by-side and putting the membrane-disruption sites (MDiS) in the same plane, exposed to solvent and in a symmetric position for both monomers. The MDoS region stabilizes the toxin on membrane by the interaction of charged residues with phospholipid head groups. Subsequently, the MDiS region destabilizes the membrane with penetration of hydrophobic residues. This insertion causes a disorganization of the membrane, allowing an uncontrolled influx of ions (i.e. calcium and sodium), and eventually triggering irreversible intracellular alterations and cell death. The chain is Basic phospholipase A2 homolog bothropstoxin-I from Bothrops jararacussu (Jararacussu).